The primary structure comprises 331 residues: Mucin-15 (331 aa).

The N-terminal stretch at 1-22 (MLTLAKIALISSLFISLPFARP) is a signal peptide. At 23–233 (QKQNPRRNVT…SDTPKENKNT (211 aa)) the chain is on the extracellular side. N-linked (GlcNAc...) asparagine glycans are attached at residues asparagine 30, asparagine 44, asparagine 54, asparagine 59, asparagine 75, asparagine 84, asparagine 120, asparagine 136, asparagine 145, asparagine 152, asparagine 215, and asparagine 222. The span at 124–162 (ADANPLQVSEHSNSTNSPSPENFTWSLDNDTMNSPEDIS) shows a compositional bias: polar residues. Residues 124 to 186 (ADANPLQVSE…VTPFTAEPTE (63 aa)) form a disordered region. A helical membrane pass occupies residues 234–254 (GIVFGAILGAILGASLLSLVG). The Cytoplasmic portion of the chain corresponds to 255-331 (YLLCGQRKTD…DAIPPLRPSI (77 aa)). The interval 302 to 331 (AVSDSSMPEGGESLQDGIPMDAIPPLRPSI) is disordered.

Highly glycosylated (N- and O-linked carbohydrates).

It localises to the membrane. The chain is Mucin-15 (Muc15) from Mus musculus (Mouse).